Reading from the N-terminus, the 724-residue chain is Probable metal-nicotianamine transporter YSL13 (724 aa).

The disordered stretch occupies residues 1–54 (MATVPTPSEAHGGATPTAADVEMVEASELRRRGKPSGDRATGPSRDGAAAAAEE). Transmembrane regions (helical) follow at residues 80–100 (AFVVSFFLVIMFSVIVMKLNL), 103–123 (GIIPSLNVSAGLLGFFFVRLW), 148–168 (CVVAGYDIAFSGGFGNYILSM), 190–210 (LGWIIGFLFLVSFIGLFGLVP), 252–272 (LGIFFILSFFWGFFQWFYTAT), 310–330 (IVNVSVLLGGILSWGIMWPLI), 355–375 (VFIAIALILGDGLYNFLKMII), 423–443 (IPWYVAYGGYAVVAAISIGTV), 455–475 (ILVAYIVAPILAFCNAYGTGL), 487–507 (LAIFAFGAWTGASHGGVLAGL), 541–561 (FVSQVIGTAMGCVIAPCVFWL), 603–623 (LNLCYAFFAAAIVVNLIRDLV), 640–660 (FYIGSYFAIDMFIGTVILFVW), and 675–695 (VASGMICGDGIWVLPQSVLAL).

It belongs to the YSL (TC 2.A.67.2) family. Expressed in leaves and at low levels in root cortex.

Its subcellular location is the membrane. Its function is as follows. May be involved in the transport of nicotianamine-chelated metals. This chain is Probable metal-nicotianamine transporter YSL13 (YSL13), found in Oryza sativa subsp. japonica (Rice).